A 1032-amino-acid chain; its full sequence is Caspase recruitment domain-containing protein 10 (1032 aa).

3 disordered regions span residues 1–23, 253–276, and 481–553; these read MPGR…SEAE, RARG…EPDN, and EFPS…MSDI. The residue at position 18 (serine 18) is a Phosphoserine. The CARD domain occupies 23–115; that stretch reads EEDALWERIE…EHFTLLTGQE (93 aa). Residues 138–456 adopt a coiled-coil conformation; that stretch reads TEVRRLREAR…LEVQLQRAQG (319 aa). 2 stretches are compositionally biased toward basic and acidic residues: residues 261 to 276 and 504 to 517; these read AEEK…EPDN and HNSE…KEIN.

In terms of assembly, CARD10 and BCL10 bind to each other by CARD-CARD interaction. They both participate in a complex with MALT1, where MALT1 binds to BCL10. Interacts with TMEM43; this interaction is essential for EGFR-mediated NF-kappa-B activation. In terms of tissue distribution, detected in adult heart, kidney and liver; lower levels in intestine, placenta, muscle and lung. Also found in fetal lung, liver and kidney.

It is found in the cytoplasm. Its function is as follows. Scaffold protein that plays an important role in mediating the activation of NF-kappa-B via BCL10 or EGFR. The protein is Caspase recruitment domain-containing protein 10 (CARD10) of Homo sapiens (Human).